The chain runs to 88 residues: Small ribosomal subunit protein uS15c (88 aa).

The protein belongs to the universal ribosomal protein uS15 family. In terms of assembly, part of the 30S ribosomal subunit.

The protein localises to the plastid. The protein resides in the chloroplast. The protein is Small ribosomal subunit protein uS15c (rps15) of Cycas taitungensis (Prince sago).